The sequence spans 174 residues: Large ribosomal subunit protein uL18 (174 aa).

This sequence belongs to the universal ribosomal protein uL18 family. As to quaternary structure, part of the 50S ribosomal subunit. Contacts the 5S and 23S rRNAs.

In terms of biological role, this is one of the proteins that bind and probably mediate the attachment of the 5S RNA into the large ribosomal subunit, where it forms part of the central protuberance. In Methanosarcina barkeri (strain Fusaro / DSM 804), this protein is Large ribosomal subunit protein uL18.